A 253-amino-acid polypeptide reads, in one-letter code: Blue-light photoreceptor (253 aa).

The PAS domain maps to 6–79; that stretch reads KFDVILKALN…AKIRHAINEK (74 aa). The residue at position 56 (C56) is an S-4a-FMN cysteine. The region spanning 80–133 is the PAC domain; it reads STANVLLKNYRKNGTSFMNELTIEPIYDDNDHLYFVGIQKDVTTEHNYQLELEK. The region spanning 142–253 is the STAS domain; that stretch reads STPIVPIKEN…STIKEALQFY (112 aa).

Post-translationally, FMN binds covalently to cysteine after exposure to blue light and this bond is spontaneously broken in the dark.

In terms of biological role, exhibits the same spectroscopical features and blue-light induced photochemistry as plants phototropins, with the reversible formation of a blue-shifted photoproduct, assigned to an FMN-cysteine thiol adduct. Positive regulator in the activation of the general stress transcription factor sigma-B. The protein is Blue-light photoreceptor of Listeria innocua serovar 6a (strain ATCC BAA-680 / CLIP 11262).